The sequence spans 324 residues: Cytochrome c biogenesis protein CcsA (324 aa).

Helical transmembrane passes span 17–37 (IISVVIIIQLMTFFVHEIPAL), 44–64 (GMIATFLSITGLLIIRWIYSG), 68–88 (LSNLYESLMFLSWSFAIIHMI), 99–119 (YLSAITIPSAIFTQAFATSGL), 145–165 (MLLSYAALLVGSLFSIALLVI), 230–250 (VISIGFSFLTIGILSGAVWAN), 264–278 (TWAFITWTIYAIYSH), and 291–311 (AIVASIGFFIIWICYFGVNLL).

The protein belongs to the CcmF/CycK/Ccl1/NrfE/CcsA family. May interact with Ccs1.

The protein localises to the plastid. It localises to the chloroplast thylakoid membrane. Required during biogenesis of c-type cytochromes (cytochrome c6 and cytochrome f) at the step of heme attachment. The protein is Cytochrome c biogenesis protein CcsA of Lemna minor (Common duckweed).